The chain runs to 164 residues: MIILGIDPGSRKTGYGIISKQGNRLIHVDNGAIFTQSAKDFPERLEKIFTGLSEIIAQYRPEVVAVEDVFLAKNAQSALKLGQARGAAIVAAVNVGLPVHEYTAMQVKQAVVGTGRAEKAQVQQMIKALLNLPEVAQEDASDALAVAICHAHSAGMSALLKGVR.

Catalysis depends on residues Asp-7, Glu-67, and Asp-139. The Mg(2+) site is built by Asp-7, Glu-67, and Asp-139.

Belongs to the RuvC family. In terms of assembly, homodimer which binds Holliday junction (HJ) DNA. The HJ becomes 2-fold symmetrical on binding to RuvC with unstacked arms; it has a different conformation from HJ DNA in complex with RuvA. In the full resolvosome a probable DNA-RuvA(4)-RuvB(12)-RuvC(2) complex forms which resolves the HJ. Requires Mg(2+) as cofactor.

It localises to the cytoplasm. The catalysed reaction is Endonucleolytic cleavage at a junction such as a reciprocal single-stranded crossover between two homologous DNA duplexes (Holliday junction).. Functionally, the RuvA-RuvB-RuvC complex processes Holliday junction (HJ) DNA during genetic recombination and DNA repair. Endonuclease that resolves HJ intermediates. Cleaves cruciform DNA by making single-stranded nicks across the HJ at symmetrical positions within the homologous arms, yielding a 5'-phosphate and a 3'-hydroxyl group; requires a central core of homology in the junction. The consensus cleavage sequence is 5'-(A/T)TT(C/G)-3'. Cleavage occurs on the 3'-side of the TT dinucleotide at the point of strand exchange. HJ branch migration catalyzed by RuvA-RuvB allows RuvC to scan DNA until it finds its consensus sequence, where it cleaves and resolves the cruciform DNA. The sequence is that of Crossover junction endodeoxyribonuclease RuvC from Geobacter sp. (strain M21).